Here is a 236-residue protein sequence, read N- to C-terminus: 1-(5-phosphoribosyl)-5-[(5-phosphoribosylamino)methylideneamino] imidazole-4-carboxamide isomerase (236 aa).

The Proton acceptor role is filled by Asp-8. Residue Asp-129 is the Proton donor of the active site.

Belongs to the HisA/HisF family.

It is found in the cytoplasm. It catalyses the reaction 1-(5-phospho-beta-D-ribosyl)-5-[(5-phospho-beta-D-ribosylamino)methylideneamino]imidazole-4-carboxamide = 5-[(5-phospho-1-deoxy-D-ribulos-1-ylimino)methylamino]-1-(5-phospho-beta-D-ribosyl)imidazole-4-carboxamide. Its pathway is amino-acid biosynthesis; L-histidine biosynthesis; L-histidine from 5-phospho-alpha-D-ribose 1-diphosphate: step 4/9. The sequence is that of 1-(5-phosphoribosyl)-5-[(5-phosphoribosylamino)methylideneamino] imidazole-4-carboxamide isomerase from Methanospirillum hungatei JF-1 (strain ATCC 27890 / DSM 864 / NBRC 100397 / JF-1).